Here is a 914-residue protein sequence, read N- to C-terminus: Alanine--tRNA ligase (914 aa).

Positions 608, 612, 711, and 715 each coordinate Zn(2+).

The protein belongs to the class-II aminoacyl-tRNA synthetase family. It depends on Zn(2+) as a cofactor.

The protein localises to the cytoplasm. It catalyses the reaction tRNA(Ala) + L-alanine + ATP = L-alanyl-tRNA(Ala) + AMP + diphosphate. Functionally, catalyzes the attachment of alanine to tRNA(Ala) in a two-step reaction: alanine is first activated by ATP to form Ala-AMP and then transferred to the acceptor end of tRNA(Ala). Also edits incorrectly charged Ser-tRNA(Ala) and Gly-tRNA(Ala) via its editing domain. This is Alanine--tRNA ligase from Methanoregula boonei (strain DSM 21154 / JCM 14090 / 6A8).